Here is a 387-residue protein sequence, read N- to C-terminus: Putative purine permease 15 (387 aa).

Helical transmembrane passes span 44–64 (WVTIIICTILAVTGQCIARLL), 84–104 (TLLQVVGFPILLLPFLLHFLI), 122–142 (LAITYSILCIYMFCQAFFSDV), 150–169 (VFTLTYTTQLLFTLIFSKYY), 179–199 (FISLILAVLAGAFTLYTFSAG), 210–230 (YGIINVAFGAAIFFSLLLCII), 252–272 (FVVVLEMIIFLSLVVTIILVA), 306–326 (VAWQIYWVGIVGLVFAVSAVF), 329–349 (VISVCTWPIVSLLVAFLYNTH), and 354–374 (VFRGIALGAAALSVSCYIYII).

This sequence belongs to the purine permeases (TC 2.A.7.14) family.

The protein resides in the membrane. In Arabidopsis thaliana (Mouse-ear cress), this protein is Putative purine permease 15 (PUP15).